A 345-amino-acid polypeptide reads, in one-letter code: Anthranilate phosphoribosyltransferase (345 aa).

5-phospho-alpha-D-ribose 1-diphosphate-binding positions include G88, 91 to 92 (GD), T96, 98 to 101 (NIST), 116 to 124 (KHGNRSASG), and S128. An anthranilate-binding site is contributed by G88. S100 provides a ligand contact to Mg(2+). N119 is a binding site for anthranilate. An anthranilate-binding site is contributed by R174. Mg(2+) is bound by residues D233 and E234.

The protein belongs to the anthranilate phosphoribosyltransferase family. As to quaternary structure, homodimer. It depends on Mg(2+) as a cofactor.

The enzyme catalyses N-(5-phospho-beta-D-ribosyl)anthranilate + diphosphate = 5-phospho-alpha-D-ribose 1-diphosphate + anthranilate. It participates in amino-acid biosynthesis; L-tryptophan biosynthesis; L-tryptophan from chorismate: step 2/5. In terms of biological role, catalyzes the transfer of the phosphoribosyl group of 5-phosphorylribose-1-pyrophosphate (PRPP) to anthranilate to yield N-(5'-phosphoribosyl)-anthranilate (PRA). The sequence is that of Anthranilate phosphoribosyltransferase from Prochlorococcus marinus (strain NATL2A).